The sequence spans 252 residues: Fatty acid elongase 4 (252 aa).

A helical membrane pass occupies residues 25-45 (LVSWHALVLGHLLYLFVVFVM). N-linked (GlcNAc...) asparagine glycosylation is present at Asn56. The helical transmembrane segment at 60–80 (VLVVYNVLQICLSAAMAINLS) threads the bilayer. A glycan (N-linked (GlcNAc...) asparagine) is linked at Asn89. A run of 5 helical transmembrane segments spans residues 100–120 (FWMF…VFIL), 127–147 (QLSF…GILL), 150–170 (GLAN…HFLM), 187–207 (FLLT…AILV), and 214–234 (FTLG…VLFL). The HxxHH motif signature appears at 132 to 136 (HVYHH). Residue His135 is the Nucleophile of the active site.

The protein belongs to the ELO family.

The protein localises to the membrane. The enzyme catalyses (5Z,8Z,11Z,14Z)-eicosatetraenoyl-CoA + malonyl-CoA + H(+) = (7Z,10Z,13Z,16Z)-3-oxodocosatetraenoyl-CoA + CO2 + CoA. The protein operates within lipid metabolism; fatty acid biosynthesis. Functionally, involved in the synthesis of fatty acids. Elongates arachidonate and other C20 polyunsaturated fatty acids (PUFAs) with a preference for n-6 PUFAs. Not involved in fatty acid synthesis up to C18. The sequence is that of Fatty acid elongase 4 from Trypanosoma brucei brucei (strain 927/4 GUTat10.1).